A 508-amino-acid polypeptide reads, in one-letter code: Matrix metalloproteinase-19 (508 aa).

Residues 1–18 (MNCQQLWLGFLLPMTVSG) form the signal peptide. Residues 19–97 (RVLGLAEVAP…EDPFNQKTLK (79 aa)) constitute a propeptide that is removed on maturation. Residues 83-90 (PRCGLEDP) carry the Cysteine switch motif. Zn(2+) contacts are provided by cysteine 85 and histidine 212. Glutamate 213 is an active-site residue. Positions 216 and 222 each coordinate Zn(2+). The tract at residues 262–288 (IRDEEEEETELPTVPPVPTEPSPMPDP) is disordered. The segment covering 274-287 (TVPPVPTEPSPMPD) has biased composition (pro residues). Hemopexin repeat units follow at residues 286 to 333 (PDPC…WEGL), 334 to 380 (PGNL…EPNL), 381 to 425 (DAAL…FTGV), and 426 to 472 (PNQP…WMHC). Cysteines 289 and 472 form a disulfide. Residue asparagine 464 is glycosylated (N-linked (GlcNAc...) asparagine).

It belongs to the peptidase M10A family. Zn(2+) serves as cofactor. Requires Ca(2+) as cofactor. Post-translationally, activated by autolytic cleavage after Lys-97. In terms of processing, tyrosine phosphorylated by PKDCC/VLK. Expressed in mammary gland, placenta, lung, pancreas, ovary, small intestine, spleen, thymus, prostate, testis colon, heart and blood vessel walls. Not detected in brain and peripheral blood leukocytes. Also expressed in the synovial fluid of normal and rheumatoid patients.

It localises to the secreted. Its subcellular location is the extracellular space. The protein localises to the extracellular matrix. Strongly inhibited by TIMP-2, TIMP-3 and TIMP-4, while TIMP-1 is less efficient. Functionally, endopeptidase that degrades various components of the extracellular matrix, such as aggrecan and cartilage oligomeric matrix protein (comp), during development, haemostasis and pathological conditions (arthritic disease). May also play a role in neovascularization or angiogenesis. Hydrolyzes collagen type IV, laminin, nidogen, nascin-C isoform, fibronectin, and type I gelatin. This Homo sapiens (Human) protein is Matrix metalloproteinase-19 (MMP19).